A 309-amino-acid polypeptide reads, in one-letter code: Protein FdhE homolog (309 aa).

This sequence belongs to the FdhE family.

Its subcellular location is the cytoplasm. Its function is as follows. Necessary for formate dehydrogenase activity. This Cronobacter sakazakii (strain ATCC BAA-894) (Enterobacter sakazakii) protein is Protein FdhE homolog.